Consider the following 23-residue polypeptide: Acidic phospholipase A2 CTs-A1 (23 aa).

The cofactor is Ca(2+). Post-translationally, contains 7 disulfide bonds. Expressed by the venom gland.

Its subcellular location is the secreted. The catalysed reaction is a 1,2-diacyl-sn-glycero-3-phosphocholine + H2O = a 1-acyl-sn-glycero-3-phosphocholine + a fatty acid + H(+). Its function is as follows. Snake venom phospholipase A2 (PLA2) that shows a moderate inhibition of ADP-induced human platelet aggregation when tested on platelet rich plasma. Exhibits moderate hydrolytic activities and prefers the anionic micelles (dPPC with deoxycholate) to the zwitterionic micelles (dPPC with Triton X-100). PLA2 catalyzes the calcium-dependent hydrolysis of the 2-acyl groups in 3-sn-phosphoglycerides. The sequence is that of Acidic phospholipase A2 CTs-A1 from Trimeresurus stejnegeri (Chinese green tree viper).